Here is a 320-residue protein sequence, read N- to C-terminus: tRNA (guanosine(34)-2'-O)-methyltransferase (320 aa).

Gly-53, Trp-55, Asp-81, Asp-97, and Asp-122 together coordinate S-adenosyl-L-methionine. Lys-162 serves as the catalytic Proton acceptor.

It belongs to the class I-like SAM-binding methyltransferase superfamily. RNA methyltransferase RlmE family. TRM7 subfamily. As to quaternary structure, interacts with CG33172/WDR6.

It is found in the cytoplasm. It catalyses the reaction cytidine(32)/guanosine(34) in tRNA + 2 S-adenosyl-L-methionine = 2'-O-methylcytidine(32)/2'-O-methylguanosine(34) in tRNA + 2 S-adenosyl-L-homocysteine + 2 H(+). Methylates the 2'-O-ribose of nucleotides at position 34 of the tRNA anticodon loop of substrate tRNAs. May require WDR6 for methylation of the nucleotide at position 34 of the anticodon loop of substrate tRNAs. Plays a role in neurogenesis. Requisite for RNA-mediated gene silencing. Modifies position 34 in tRNA(Leu(CAA)), tRNA(Leu(CAG)), tRNA(Phe(GAA)), and tRNA(Trp(CCA)). In Drosophila melanogaster (Fruit fly), this protein is tRNA (guanosine(34)-2'-O)-methyltransferase.